Here is a 427-residue protein sequence, read N- to C-terminus: UPF0761 membrane protein Plut_1323 (427 aa).

6 helical membrane passes run 51 to 71 (LLSI…FAVF), 105 to 125 (TFTM…VLIS), 147 to 167 (FTLY…SLAA), 188 to 208 (LLSL…YLLV), 221 to 241 (GALV…FYVA), and 251 to 271 (GALS…VVVL).

This sequence belongs to the UPF0761 family.

It is found in the cell inner membrane. This is UPF0761 membrane protein Plut_1323 from Chlorobium luteolum (strain DSM 273 / BCRC 81028 / 2530) (Pelodictyon luteolum).